The primary structure comprises 131 residues: Ribosome-binding factor A (131 aa).

The protein belongs to the RbfA family. In terms of assembly, monomer. Binds 30S ribosomal subunits, but not 50S ribosomal subunits or 70S ribosomes.

It is found in the cytoplasm. Functionally, one of several proteins that assist in the late maturation steps of the functional core of the 30S ribosomal subunit. Associates with free 30S ribosomal subunits (but not with 30S subunits that are part of 70S ribosomes or polysomes). Required for efficient processing of 16S rRNA. May interact with the 5'-terminal helix region of 16S rRNA. This Christiangramia forsetii (strain DSM 17595 / CGMCC 1.15422 / KT0803) (Gramella forsetii) protein is Ribosome-binding factor A.